Consider the following 215-residue polypeptide: Histidine biosynthesis bifunctional protein HisIE (215 aa).

The segment at 1–118 (MTKSISIEHL…YKNDVALLQI (118 aa)) is phosphoribosyl-AMP cyclohydrolase. Positions 119–215 (IPQVSAKIKE…HVEKEGQQRE (97 aa)) are phosphoribosyl-ATP pyrophosphohydrolase.

In the N-terminal section; belongs to the PRA-CH family. This sequence in the C-terminal section; belongs to the PRA-PH family.

The protein resides in the cytoplasm. It catalyses the reaction 1-(5-phospho-beta-D-ribosyl)-ATP + H2O = 1-(5-phospho-beta-D-ribosyl)-5'-AMP + diphosphate + H(+). The catalysed reaction is 1-(5-phospho-beta-D-ribosyl)-5'-AMP + H2O = 1-(5-phospho-beta-D-ribosyl)-5-[(5-phospho-beta-D-ribosylamino)methylideneamino]imidazole-4-carboxamide. It functions in the pathway amino-acid biosynthesis; L-histidine biosynthesis; L-histidine from 5-phospho-alpha-D-ribose 1-diphosphate: step 2/9. Its pathway is amino-acid biosynthesis; L-histidine biosynthesis; L-histidine from 5-phospho-alpha-D-ribose 1-diphosphate: step 3/9. This chain is Histidine biosynthesis bifunctional protein HisIE, found in Oceanobacillus iheyensis (strain DSM 14371 / CIP 107618 / JCM 11309 / KCTC 3954 / HTE831).